A 334-amino-acid chain; its full sequence is Holliday junction branch migration complex subunit RuvB (334 aa).

A large ATPase domain (RuvB-L) region spans residues 1-182 (MDERLVSTEA…FGVHARLEYY (182 aa)). Residues Leu21, Arg22, Gly63, Lys66, Thr67, Thr68, 129–131 (EDF), Arg172, Tyr182, and Arg219 contribute to the ATP site. Residue Thr67 coordinates Mg(2+). The small ATPAse domain (RuvB-S) stretch occupies residues 183–253 (EQRDLAHIVS…IAEDALERLQ (71 aa)). Residues 256 to 334 (KLGLDHIDHK…HFQMEVPIRD (79 aa)) are head domain (RuvB-H). The DNA site is built by Arg311 and Arg316.

This sequence belongs to the RuvB family. As to quaternary structure, homohexamer. Forms an RuvA(8)-RuvB(12)-Holliday junction (HJ) complex. HJ DNA is sandwiched between 2 RuvA tetramers; dsDNA enters through RuvA and exits via RuvB. An RuvB hexamer assembles on each DNA strand where it exits the tetramer. Each RuvB hexamer is contacted by two RuvA subunits (via domain III) on 2 adjacent RuvB subunits; this complex drives branch migration. In the full resolvosome a probable DNA-RuvA(4)-RuvB(12)-RuvC(2) complex forms which resolves the HJ.

The protein localises to the cytoplasm. The catalysed reaction is ATP + H2O = ADP + phosphate + H(+). Functionally, the RuvA-RuvB-RuvC complex processes Holliday junction (HJ) DNA during genetic recombination and DNA repair, while the RuvA-RuvB complex plays an important role in the rescue of blocked DNA replication forks via replication fork reversal (RFR). RuvA specifically binds to HJ cruciform DNA, conferring on it an open structure. The RuvB hexamer acts as an ATP-dependent pump, pulling dsDNA into and through the RuvAB complex. RuvB forms 2 homohexamers on either side of HJ DNA bound by 1 or 2 RuvA tetramers; 4 subunits per hexamer contact DNA at a time. Coordinated motions by a converter formed by DNA-disengaged RuvB subunits stimulates ATP hydrolysis and nucleotide exchange. Immobilization of the converter enables RuvB to convert the ATP-contained energy into a lever motion, pulling 2 nucleotides of DNA out of the RuvA tetramer per ATP hydrolyzed, thus driving DNA branch migration. The RuvB motors rotate together with the DNA substrate, which together with the progressing nucleotide cycle form the mechanistic basis for DNA recombination by continuous HJ branch migration. Branch migration allows RuvC to scan DNA until it finds its consensus sequence, where it cleaves and resolves cruciform DNA. The protein is Holliday junction branch migration complex subunit RuvB of Bacillus pumilus (strain SAFR-032).